Consider the following 115-residue polypeptide: Divalent-cation tolerance protein CutA (115 aa).

Cu cation contacts are provided by Cys19, His86, and His87.

The protein belongs to the CutA family. In terms of assembly, homotrimer. The cofactor is Cu cation.

The protein localises to the cytoplasm. Functionally, involved in resistance toward heavy metals. This Salmonella agona (strain SL483) protein is Divalent-cation tolerance protein CutA.